A 354-amino-acid polypeptide reads, in one-letter code: Ferrochelatase (354 aa).

Positions 214 and 295 each coordinate Fe cation.

This sequence belongs to the ferrochelatase family.

It localises to the cytoplasm. It carries out the reaction heme b + 2 H(+) = protoporphyrin IX + Fe(2+). It participates in porphyrin-containing compound metabolism; protoheme biosynthesis; protoheme from protoporphyrin-IX: step 1/1. Catalyzes the ferrous insertion into protoporphyrin IX. The sequence is that of Ferrochelatase from Burkholderia vietnamiensis (strain G4 / LMG 22486) (Burkholderia cepacia (strain R1808)).